Here is a 467-residue protein sequence, read N- to C-terminus: Zinc finger and BTB domain-containing protein 43 (467 aa).

Residue Met1 is modified to N-acetylmethionine. Residues 33-97 enclose the BTB domain; sequence CDVSIVVQGH…SYTGRLVMPA (65 aa). 2 disordered regions span residues 134-153 and 162-225; these read LNHG…GLVE and HTDF…SAEF. Basic and acidic residues-rich tracts occupy residues 164-174 and 182-194; these read DFPKAQELRDG and KDEL…EHEY. Residues Lys182, Lys241, Lys247, Lys297, and Lys358 each participate in a glycyl lysine isopeptide (Lys-Gly) (interchain with G-Cter in SUMO2) cross-link. The segment at 373 to 394 adopts a C2H2-type 1; atypical zinc-finger fold; it reads YPCQCGKSFTHKSQRDRHMSMH. A C2H2-type 2 zinc finger spans residues 400–422; the sequence is YGCGVCGKKFKMKHHLVGHMKIH. Phosphothreonine is present on Thr423. A C2H2-type 3; atypical zinc finger spans residues 428–450; sequence YECNICAKRFMWRDSFHRHVTSC. A Glycyl lysine isopeptide (Lys-Gly) (interchain with G-Cter in SUMO2) cross-link involves residue Lys458.

Belongs to the krueppel C2H2-type zinc-finger protein family. As to quaternary structure, interacts with BDP1.

The protein localises to the nucleus. Its function is as follows. May be involved in transcriptional regulation. The sequence is that of Zinc finger and BTB domain-containing protein 43 (ZBTB43) from Homo sapiens (Human).